The chain runs to 220 residues: Large ribosomal subunit protein uL1 (220 aa).

The protein belongs to the universal ribosomal protein uL1 family. In terms of assembly, part of the 50S ribosomal subunit.

Binds directly to 23S rRNA. The L1 stalk is quite mobile in the ribosome, and is involved in E site tRNA release. In terms of biological role, protein L1 is also a translational repressor protein, it controls the translation of the L11 operon by binding to its mRNA. The chain is Large ribosomal subunit protein uL1 from Ehrlichia canis (strain Jake).